The sequence spans 1135 residues: APC membrane recruitment protein 1 (1135 aa).

Methionine 1 bears the N-acetylmethionine mark. Disordered regions lie at residues 1–115 (METQ…EGTG), 156–308 (AEKF…VGDP), 339–405 (SMTD…EDDD), 447–484 (GLAP…DDSG), 736–764 (NFGG…KEGN), 921–948 (LQAQ…PLSL), and 1007–1135 (VPES…NLAK). The span at 10-19 (QAKGAAASGS) shows a compositional bias: low complexity. Positions 23–35 (QTAEKGAKNKAAE) are enriched in basic and acidic residues. Residues 36 to 50 (ATEGPTSEPSSSGPG) show a composition bias toward low complexity. Residues 73–83 (FGGGRSKGSGK) are compositionally biased toward gly residues. Composition is skewed to basic and acidic residues over residues 94–107 (KTHD…HGPE) and 196–208 (GPER…HEHV). Over residues 238–248 (KVSPTPEPSPP) the composition is skewed to pro residues. A Phosphoserine modification is found at serine 246. Basic and acidic residues-rich tracts occupy residues 253–262 (MACKDPEKPM) and 282–291 (EEPHSPETGE). Acidic residues predominate over residues 373 to 405 (ALPDDDDEEEEEEEEVELEEEEEEVKEEEEDDD). The span at 455-466 (TPQSDQQESAPN) shows a compositional bias: polar residues. A compositionally biased stretch (acidic residues) spans 926–938 (EDSDEEDEEEEEG). Positions 1058–1069 (PSCSSSSGGFSP) are enriched in low complexity. Positions 1119-1135 (SLATSYSSTAMNGNLAK) are enriched in polar residues.

Belongs to the Amer family. Interacts with CTNNB1, AXIN1, LRP6, KEAP1, APC and BTRC. Interacts with SCF (SKP1-CUL1-F-box protein) E3 ubiquitin-protein ligase complexes containing BTRC and/or FBXW11. Identified in the beta-catenin destruction complex containing CTNNB1, APC, AXIN1 and AXIN2. Interacts with WT1. As to expression, detected in fetal and adult kidney, brain and spleen.

It is found in the cytoplasm. It localises to the cell membrane. Its subcellular location is the nucleus. Its function is as follows. Regulator of the canonical Wnt signaling pathway. Acts by specifically binding phosphatidylinositol 4,5-bisphosphate (PtdIns(4,5)P2), translocating to the cell membrane and interacting with key regulators of the canonical Wnt signaling pathway, such as components of the beta-catenin destruction complex. Acts both as a positive and negative regulator of the Wnt signaling pathway, depending on the context: acts as a positive regulator by promoting LRP6 phosphorylation. Also acts as a negative regulator by acting as a scaffold protein for the beta-catenin destruction complex and promoting stabilization of Axin at the cell membrane. Promotes CTNNB1 ubiquitination and degradation. Involved in kidney development. The sequence is that of APC membrane recruitment protein 1 (AMER1) from Homo sapiens (Human).